We begin with the raw amino-acid sequence, 222 residues long: MSDDKLIPATPDADAYAKTADANAAEIFDRDEPFALFADWLTEAKKKEPNDANAMALATADASGLPDVRMVLLKDVDADGFVFYTNLESGKGGQLADNPQAALCFHWKSLRRQVRVRGAVEPVSAGEADAYFASRARDSRIGAWASKQSRPLESRFALEKSVAREAARFGLGEVPRPPHWSGFRIRPLSLEFWRDRPFRLHDRMFFDRPDLGSTWTVTRLYP.

FMN contacts are provided by residues 69 to 74, 84 to 85, K91, and Q113; these read RMVLLK and YT. Substrate is bound at residue K74. Positions 131, 135, and 139 each coordinate substrate. FMN is bound by residues 148-149 and W193; that span reads QS. 199 to 201 provides a ligand contact to substrate; it reads RLH. FMN is bound at residue R203.

Belongs to the pyridoxamine 5'-phosphate oxidase family. In terms of assembly, homodimer. FMN serves as cofactor.

The catalysed reaction is pyridoxamine 5'-phosphate + O2 + H2O = pyridoxal 5'-phosphate + H2O2 + NH4(+). It catalyses the reaction pyridoxine 5'-phosphate + O2 = pyridoxal 5'-phosphate + H2O2. Its pathway is cofactor metabolism; pyridoxal 5'-phosphate salvage; pyridoxal 5'-phosphate from pyridoxamine 5'-phosphate: step 1/1. The protein operates within cofactor metabolism; pyridoxal 5'-phosphate salvage; pyridoxal 5'-phosphate from pyridoxine 5'-phosphate: step 1/1. Catalyzes the oxidation of either pyridoxine 5'-phosphate (PNP) or pyridoxamine 5'-phosphate (PMP) into pyridoxal 5'-phosphate (PLP). The sequence is that of Pyridoxine/pyridoxamine 5'-phosphate oxidase from Maricaulis maris (strain MCS10) (Caulobacter maris).